The primary structure comprises 610 residues: Pentatricopeptide repeat-containing protein At5g40400 (610 aa).

PPR repeat units lie at residues Asp-165 to Val-199, Ser-200 to Pro-234, Asn-235 to Pro-269, Asp-270 to Pro-304, Asp-305 to Pro-339, Asp-340 to Pro-374, Asp-375 to Ile-409, Pro-410 to Ala-445, Lys-446 to Leu-480, Asp-481 to Pro-515, Asp-516 to Glu-546, and Asp-551 to Pro-586.

It belongs to the PPR family. P subfamily.

This Arabidopsis thaliana (Mouse-ear cress) protein is Pentatricopeptide repeat-containing protein At5g40400.